Reading from the N-terminus, the 251-residue chain is Appressoria-specific virulence factor GAS1 (251 aa).

The first 21 residues, 1–21 (MSLKSLIAATILAAPLVAGHG), serve as a signal peptide directing secretion. The tract at residues 40–76 (VTSTPRDGTRRDPFQQDSTRFKGQQADTFGETVGGGQ) is disordered. Polar residues predominate over residues 54 to 66 (QQDSTRFKGQQAD).

Its subcellular location is the cytoplasm. Its function is as follows. Appressoria-specific virulence factor required for appressorial penetration in host and lesion development. The sequence is that of Appressoria-specific virulence factor GAS1 from Pyricularia oryzae (strain 70-15 / ATCC MYA-4617 / FGSC 8958) (Rice blast fungus).